The sequence spans 408 residues: Dicamba O-demethylase 1, ferredoxin reductase component (408 aa).

FAD is bound by residues glycine 14, lysine 49, valine 82, arginine 130, aspartate 279, and valine 298.

It belongs to the FAD-dependent oxidoreductase family. As to quaternary structure, monomer. The dicamba O-demethylase multicomponent enzyme system is composed of an oxygenase component (DdmC) and an electron transfer component formed by a ferredoxin reductase (DdmA1) and a ferredoxin (DdmB). In vitro, dicamba O-demethylase assays in which DdmA2 is substituted for DdmA1 demonstrate that the two enzymes possess nearly identical activities. Requires FAD as cofactor.

It catalyses the reaction 2 reduced [2Fe-2S]-[ferredoxin] + NAD(+) + H(+) = 2 oxidized [2Fe-2S]-[ferredoxin] + NADH. In terms of biological role, component of the dicamba O-demethylase multicomponent enzyme system involved in the degradation of the herbicide dicamba. In vitro, catalyzes the transfers of electrons from ferredoxin (DdmB) to NADH. Both NADH and NADPH support enzyme activity, with NADH being markedly more effective than NADPH. This is Dicamba O-demethylase 1, ferredoxin reductase component from Stenotrophomonas maltophilia (Pseudomonas maltophilia).